Reading from the N-terminus, the 266-residue chain is 22 kDa alpha-zein 8 (266 aa).

A signal peptide spans 1-21 (MATKILALLALLALFVSATNA).

Belongs to the zein family.

Its function is as follows. Zeins are major seed storage proteins. The polypeptide is 22 kDa alpha-zein 8 (Zea mays (Maize)).